The following is a 315-amino-acid chain: Type II restriction enzyme SalI (315 aa).

It catalyses the reaction Endonucleolytic cleavage of DNA to give specific double-stranded fragments with terminal 5'-phosphates.. Functionally, a P subtype restriction enzyme that recognizes the double-stranded sequence 5'-GTCGAC-3' and cleaves after G-1. The chain is Type II restriction enzyme SalI from Streptomyces albus G.